A 357-amino-acid polypeptide reads, in one-letter code: Quinolinate synthase (357 aa).

Iminosuccinate is bound by residues H50 and S71. Position 116 (C116) interacts with [4Fe-4S] cluster. Iminosuccinate contacts are provided by residues 142–144 (YAN) and S159. Position 203 (C203) interacts with [4Fe-4S] cluster. Iminosuccinate-binding positions include 229 to 231 (HPE) and T246. Residue C300 coordinates [4Fe-4S] cluster.

The protein belongs to the quinolinate synthase family. Type 1 subfamily. It depends on [4Fe-4S] cluster as a cofactor.

The protein resides in the cytoplasm. The catalysed reaction is iminosuccinate + dihydroxyacetone phosphate = quinolinate + phosphate + 2 H2O + H(+). It participates in cofactor biosynthesis; NAD(+) biosynthesis; quinolinate from iminoaspartate: step 1/1. Its function is as follows. Catalyzes the condensation of iminoaspartate with dihydroxyacetone phosphate to form quinolinate. This Shewanella oneidensis (strain ATCC 700550 / JCM 31522 / CIP 106686 / LMG 19005 / NCIMB 14063 / MR-1) protein is Quinolinate synthase.